We begin with the raw amino-acid sequence, 198 residues long: Transcriptional regulator GfcR (198 aa).

The protein belongs to the purine/pyrimidine phosphoribosyltransferase family. GfcR subfamily.

The polypeptide is Transcriptional regulator GfcR (Methanosphaera stadtmanae (strain ATCC 43021 / DSM 3091 / JCM 11832 / MCB-3)).